We begin with the raw amino-acid sequence, 47 residues long: Diuretic hormone 2 (47 aa).

Belongs to the sauvagine/corticotropin-releasing factor/urotensin I family.

The protein resides in the secreted. Functionally, stimulates fluid secretion by the Malpighian tubules. Increases cyclic AMP production in Malpighian tubules. This chain is Diuretic hormone 2, found in Tenebrio molitor (Yellow mealworm beetle).